The chain runs to 338 residues: RNA 3'-terminal phosphate cyclase (338 aa).

ATP is bound by residues Gln103 and 283–287 (YLADQ). His308 (tele-AMP-histidine intermediate) is an active-site residue.

The protein belongs to the RNA 3'-terminal cyclase family. Type 1 subfamily.

Its subcellular location is the cytoplasm. It carries out the reaction a 3'-end 3'-phospho-ribonucleotide-RNA + ATP = a 3'-end 2',3'-cyclophospho-ribonucleotide-RNA + AMP + diphosphate. In terms of biological role, catalyzes the conversion of 3'-phosphate to a 2',3'-cyclic phosphodiester at the end of RNA. The mechanism of action of the enzyme occurs in 3 steps: (A) adenylation of the enzyme by ATP; (B) transfer of adenylate to an RNA-N3'P to produce RNA-N3'PP5'A; (C) and attack of the adjacent 2'-hydroxyl on the 3'-phosphorus in the diester linkage to produce the cyclic end product. The biological role of this enzyme is unknown but it is likely to function in some aspects of cellular RNA processing. This chain is RNA 3'-terminal phosphate cyclase, found in Escherichia coli (strain K12 / MC4100 / BW2952).